The following is a 404-amino-acid chain: Arginine biosynthesis bifunctional protein ArgJ (404 aa).

Residues Thr156, Lys182, Thr193, Glu277, Asn399, and Ser404 each contribute to the substrate site. The active-site Nucleophile is Thr193.

This sequence belongs to the ArgJ family. As to quaternary structure, heterotetramer of two alpha and two beta chains.

It is found in the cytoplasm. The catalysed reaction is N(2)-acetyl-L-ornithine + L-glutamate = N-acetyl-L-glutamate + L-ornithine. It catalyses the reaction L-glutamate + acetyl-CoA = N-acetyl-L-glutamate + CoA + H(+). It functions in the pathway amino-acid biosynthesis; L-arginine biosynthesis; L-ornithine and N-acetyl-L-glutamate from L-glutamate and N(2)-acetyl-L-ornithine (cyclic): step 1/1. It participates in amino-acid biosynthesis; L-arginine biosynthesis; N(2)-acetyl-L-ornithine from L-glutamate: step 1/4. In terms of biological role, catalyzes two activities which are involved in the cyclic version of arginine biosynthesis: the synthesis of N-acetylglutamate from glutamate and acetyl-CoA as the acetyl donor, and of ornithine by transacetylation between N(2)-acetylornithine and glutamate. This is Arginine biosynthesis bifunctional protein ArgJ from Chlorobaculum tepidum (strain ATCC 49652 / DSM 12025 / NBRC 103806 / TLS) (Chlorobium tepidum).